The following is a 484-amino-acid chain: Zinc metalloproteinase-disintegrin jerdonitin (484 aa).

The first 20 residues, 1–20, serve as a signal peptide directing secretion; sequence MIQVLLVTICLAVFPYQGSS. A propeptide spanning residues 21–191 is cleaved from the precursor; that stretch reads IILESGNIDD…KLSQIMIPPE (171 aa). The residue at position 192 (glutamine 192) is a Pyrrolidone carboxylic acid. Positions 194-392 constitute a Peptidase M12B domain; sequence RYIELVIVAD…FTSRCLYNEP (199 aa). Glutamate 197 and aspartate 281 together coordinate Ca(2+). Disulfide bonds link cysteine 305–cysteine 387, cysteine 345–cysteine 369, and cysteine 347–cysteine 352. Position 330 (histidine 330) interacts with Zn(2+). Residue glutamate 331 is part of the active site. Zn(2+) contacts are provided by histidine 334 and histidine 340. Ca(2+)-binding residues include cysteine 387, asparagine 390, valine 402, asparagine 405, glutamate 409, glutamate 412, and aspartate 415. The region spanning 400–484 is the Disintegrin domain; it reads PSVCGNYYME…AGCPRNPFHA (85 aa). Cystine bridges form between cysteine 403/cysteine 422, cysteine 414/cysteine 432, cysteine 416/cysteine 427, cysteine 426/cysteine 449, cysteine 440/cysteine 446, cysteine 445/cysteine 470, and cysteine 458/cysteine 477. The Cell attachment site signature appears at 462-464; sequence RGD.

Belongs to the venom metalloproteinase (M12B) family. P-II subfamily. P-IIb sub-subfamily. As to quaternary structure, monomer. Requires Zn(2+) as cofactor. In terms of processing, the N-terminus is blocked. Expressed by the venom gland.

It localises to the secreted. With respect to regulation, fibrinogenolytic activity is completely inhibited by EDTA, but not by PMSF. Its function is as follows. Snake venom zinc metalloproteinase that inhibits ADP-induced human platelet aggregation (IC(50)=120 nM (native) and IC(50)=248 nM (recombinant)). May act by binding to the receptor GPIIb/GPIIIa (ITGA2B/ITGB3) on the platelet surface. Degrades the alpha-chain of fibrinogen completely and the beta-chain partially, leaving the gamma chain intact. Also inhibits the growth of several cell lines, including human liver cancer cells (Bel7402), human leukemia cells (K562) and human gastric carcinoma cells (BGC823). The polypeptide is Zinc metalloproteinase-disintegrin jerdonitin (Protobothrops jerdonii (Jerdon's pitviper)).